Reading from the N-terminus, the 620-residue chain is LysM domain receptor-like kinase 3 (620 aa).

A signal peptide spans 1-23; sequence MNLKNGLLLFILFLDCVFFKVES. The Extracellular segment spans residues 24–231; sequence KCVKGCDVAL…YSRTGIAKGS (208 aa). Intrachain disulfides connect cysteine 25-cysteine 92, cysteine 29-cysteine 154, and cysteine 90-cysteine 152. Residue asparagine 46 is glycosylated (N-linked (GlcNAc...) asparagine). A LysM 1; degenerate domain is found at 46 to 72; the sequence is NISNFMQSKIVLTNSFDVIMSYNRDVV. 2 LysM domains span residues 102–148 and 167–210; these read FEYT…KINV and VTYP…VFIP. Residues 108-114 and 136-142 contribute to the chitin site; these read EGDDYDL and DPNHIPV. Asparagine 147 and asparagine 199 each carry an N-linked (GlcNAc...) asparagine glycan. A helical transmembrane segment spans residues 232 to 252; the sequence is AVGIAMAGIFGLLLFVIYIYA. Over 253 to 620 the chain is Cytoplasmic; sequence KYFQKKEEEK…QSLINLLSTR (368 aa). The segment covering 265–278 has biased composition (polar residues); it reads LPQTSRAFSTQDAS. The segment at 265-292 is disordered; that stretch reads LPQTSRAFSTQDASGSAEYETSGSSGHA. Phosphoserine occurs at positions 269 and 273. Positions 322–595 constitute a Protein kinase domain; sequence FSLDNKIGQG…RSIVVALMTL (274 aa). Residues 328–336 and lysine 349 contribute to the ATP site; that span reads IGQGGFGAV. Aspartate 441 serves as the catalytic Proton acceptor.

This sequence belongs to the protein kinase superfamily. Ser/Thr protein kinase family. As to quaternary structure, forms homodimers and homooligomers. Forms heteromeric complexes with NFP at the cell periphery in nodules. Interacts with PUB1. In terms of processing, autophosphorylated. Expressed in the epidermal and root hair cells of the developing root hair zone during nonsymbiotic growth. Accumulates in roots and nodules during symbiotic growth with rhizobia. Localized at the cell periphery in a narrow zone of about two cell layers (e.g. L1/L2 zone) at the nodule apex upon infection by rhizobia, from the meristem to the infection zone (at protein level).

It localises to the cell membrane. The protein localises to the vacuole lumen. The catalysed reaction is L-seryl-[protein] + ATP = O-phospho-L-seryl-[protein] + ADP + H(+). It catalyses the reaction L-threonyl-[protein] + ATP = O-phospho-L-threonyl-[protein] + ADP + H(+). Its function is as follows. Putative receptor for S.meliloti Nod factor signals essential for the establishment of the nitrogen-fixing, root nodule symbiosis with S.meliloti. Involved in the control of root hair curling after S.meliloti infection, probably by modulating the reorganization of the microtubular cytoskeleton in epidermal and cortical cells. Regulates a subset of Nod factor-induced genes. The chain is LysM domain receptor-like kinase 3 from Medicago truncatula (Barrel medic).